The chain runs to 190 residues: uncharacterized protein (190 aa).

The N-terminal stretch at 1–15 is a signal peptide; that stretch reads MKVFAYIALATVVAG.

Its subcellular location is the secreted. This is an uncharacterized protein from Arthroderma benhamiae (strain ATCC MYA-4681 / CBS 112371) (Trichophyton mentagrophytes).